The chain runs to 528 residues: 2-isopropylmalate synthase (528 aa).

Positions Ile-12–Val-279 constitute a Pyruvate carboxyltransferase domain. The Mn(2+) site is built by Asp-21, His-214, His-216, and Asn-250. Residues Arg-401–Ala-528 are regulatory domain.

It belongs to the alpha-IPM synthase/homocitrate synthase family. LeuA type 1 subfamily. As to quaternary structure, homodimer. The cofactor is Mn(2+).

The protein localises to the cytoplasm. The catalysed reaction is 3-methyl-2-oxobutanoate + acetyl-CoA + H2O = (2S)-2-isopropylmalate + CoA + H(+). It functions in the pathway amino-acid biosynthesis; L-leucine biosynthesis; L-leucine from 3-methyl-2-oxobutanoate: step 1/4. Its function is as follows. Catalyzes the condensation of the acetyl group of acetyl-CoA with 3-methyl-2-oxobutanoate (2-ketoisovalerate) to form 3-carboxy-3-hydroxy-4-methylpentanoate (2-isopropylmalate). In Stenotrophomonas maltophilia (strain R551-3), this protein is 2-isopropylmalate synthase.